A 265-amino-acid polypeptide reads, in one-letter code: Urease accessory protein UreH (265 aa).

The protein belongs to the UreD family. UreH, UreF and UreG form a complex that acts as a GTP-hydrolysis-dependent molecular chaperone, activating the urease apoprotein by helping to assemble the nickel containing metallocenter of UreC. The UreE protein probably delivers the nickel.

It localises to the cytoplasm. In terms of biological role, required for maturation of urease via the functional incorporation of the urease nickel metallocenter. This is Urease accessory protein UreH from Helicobacter pylori (strain HPAG1).